A 159-amino-acid polypeptide reads, in one-letter code: MNRVLYPGTFDPITKGHGDLVERASRLFDQVVIAVAASPKKNPLFPLEQRVELAREVTKHLPNVEVVGFSTLLAHFAKEQNANVFLRGLRAVSDFEYEFQLANMNRQLAPDVESLFLTPSERYSFISSTLVREIAALGGDITKFVHPAVAQALTERFKR.

Substrate is bound at residue threonine 9. ATP is bound by residues 9–10 and histidine 17; that span reads TF. Lysine 41, leucine 73, and arginine 87 together coordinate substrate. ATP contacts are provided by residues 88-90, glutamate 98, and 123-129; these read GLR and YSFISST.

Belongs to the bacterial CoaD family. In terms of assembly, homohexamer. Mg(2+) is required as a cofactor.

It localises to the cytoplasm. It carries out the reaction (R)-4'-phosphopantetheine + ATP + H(+) = 3'-dephospho-CoA + diphosphate. Its pathway is cofactor biosynthesis; coenzyme A biosynthesis; CoA from (R)-pantothenate: step 4/5. Functionally, reversibly transfers an adenylyl group from ATP to 4'-phosphopantetheine, yielding dephospho-CoA (dPCoA) and pyrophosphate. In Pseudomonas syringae pv. syringae (strain B728a), this protein is Phosphopantetheine adenylyltransferase.